A 405-amino-acid polypeptide reads, in one-letter code: MNKFLKYFLILLALVLIVVPIVFATLLFKTSQDAFESSQDSKNANRQSNLRDNKVNPEEQPISILFLGIDDNDGRRKKGQDAEHSRSDAMILTTFNQSKHQIRMLSIPRDTISYIPKVGYYDKITHAHAYGGPIAAMDSVEATMNVPVDYYVRVNMKAFVEAVNELGGIYYDVPYDLNEPNTDDTGKIKIKKGYQKLNGDEALAVARTRHHDSDLKRGQRQMELIKILFQKAQEVDSIDKLDNVIQIVGKNAKHNLTNSEIKALAKMYLTNDVEIKTAQLKGKDDMLNGIYYYHPSVESIQKYANLLRKDLELSPINDKNDFLDQRVINHYGSLIPLTPLDNSLLRKEQNDTTDKDKTSNENSDSTNNSDSSNQQQPATDQNSNQNQGGTQQAPQASNNQNGVVN.

The signal sequence occupies residues 1-34 (MNKFLKYFLILLALVLIVVPIVFATLLFKTSQDA). The span at 348–359 (EQNDTTDKDKTS) shows a compositional bias: basic and acidic residues. Residues 348–405 (EQNDTTDKDKTSNENSDSTNNSDSSNQQQPATDQNSNQNQGGTQQAPQASNNQNGVVN) are disordered. 2 stretches are compositionally biased toward low complexity: residues 360–373 (NENS…DSSN) and 381–392 (QNSNQNQGGTQQ). Positions 393-405 (APQASNNQNGVVN) are enriched in polar residues.

Belongs to the LytR/CpsA/Psr (LCP) family.

This is an uncharacterized protein from Staphylococcus aureus (strain NCTC 8325 / PS 47).